A 255-amino-acid chain; its full sequence is Acetylglutamate kinase (255 aa).

Residues 40–41, Arg62, and Asn153 contribute to the substrate site; that span reads GG.

This sequence belongs to the acetylglutamate kinase family. ArgB subfamily.

The protein localises to the cytoplasm. It carries out the reaction N-acetyl-L-glutamate + ATP = N-acetyl-L-glutamyl 5-phosphate + ADP. Its pathway is amino-acid biosynthesis; L-arginine biosynthesis; N(2)-acetyl-L-ornithine from L-glutamate: step 2/4. In terms of biological role, catalyzes the ATP-dependent phosphorylation of N-acetyl-L-glutamate. The protein is Acetylglutamate kinase of Bacillus cereus (strain ATCC 10987 / NRS 248).